We begin with the raw amino-acid sequence, 482 residues long: tRNA sulfurtransferase (482 aa).

Residues 61–165 enclose the THUMP domain; it reads LAIRDALTRI…DDRLLLIKGR (105 aa). Residues 183–184, K265, G287, and Q296 contribute to the ATP site; that span reads LI. C344 and C456 are oxidised to a cystine. In terms of domain architecture, Rhodanese spans 404 to 482; the sequence is FGPNDVILDI…GFNNVKVYRP (79 aa). C456 (cysteine persulfide intermediate) is an active-site residue.

The protein belongs to the ThiI family.

Its subcellular location is the cytoplasm. It carries out the reaction [ThiI sulfur-carrier protein]-S-sulfanyl-L-cysteine + a uridine in tRNA + 2 reduced [2Fe-2S]-[ferredoxin] + ATP + H(+) = [ThiI sulfur-carrier protein]-L-cysteine + a 4-thiouridine in tRNA + 2 oxidized [2Fe-2S]-[ferredoxin] + AMP + diphosphate. The catalysed reaction is [ThiS sulfur-carrier protein]-C-terminal Gly-Gly-AMP + S-sulfanyl-L-cysteinyl-[cysteine desulfurase] + AH2 = [ThiS sulfur-carrier protein]-C-terminal-Gly-aminoethanethioate + L-cysteinyl-[cysteine desulfurase] + A + AMP + 2 H(+). It functions in the pathway cofactor biosynthesis; thiamine diphosphate biosynthesis. Its function is as follows. Catalyzes the ATP-dependent transfer of a sulfur to tRNA to produce 4-thiouridine in position 8 of tRNAs, which functions as a near-UV photosensor. Also catalyzes the transfer of sulfur to the sulfur carrier protein ThiS, forming ThiS-thiocarboxylate. This is a step in the synthesis of thiazole, in the thiamine biosynthesis pathway. The sulfur is donated as persulfide by IscS. This is tRNA sulfurtransferase from Escherichia coli (strain ATCC 8739 / DSM 1576 / NBRC 3972 / NCIMB 8545 / WDCM 00012 / Crooks).